The primary structure comprises 570 residues: High-affinity hexose transporter HXT7 (570 aa).

Residues 1 to 60 lie on the Cytoplasmic side of the membrane; it reads MSQDAAIAEQTPVEHLSAVDSASHSVLSTPSNKAERDEIKAYGEGEEHEPVVEIPKRPAS. The chain crosses the membrane as a helical span at residues 61–81; sequence AYVTVSIMCIMIAFGGFVFGW. Topologically, residues 82-116 are extracellular; it reads DTGTISGFINQTDFIRRFGMKHKDGTNYLSKVRTG. N-linked (GlcNAc...) asparagine glycosylation occurs at Asn-91. The chain crosses the membrane as a helical span at residues 117-137; the sequence is LIVSIFNIGCAIGGIILSKLG. Topologically, residues 138–143 are cytoplasmic; sequence DMYGRK. Residues 144 to 164 traverse the membrane as a helical segment; it reads VGLIVVVVIYIIGIIIQIASI. Residues 165-174 are Extracellular-facing; the sequence is NKWYQYFIGR. Residues 175 to 195 traverse the membrane as a helical segment; the sequence is IISGLGVGGIAVLSPMLISEV. At 196 to 201 the chain is on the cytoplasmic side; the sequence is SPKHLR. The chain crosses the membrane as a helical span at residues 202–222; the sequence is GTLVSCYQLMITAGIFLGYCT. At 223 to 236 the chain is on the extracellular side; that stretch reads NFGTKNYSNSVQWR. N-linked (GlcNAc...) asparagine glycosylation is present at Asn-228. The helical transmembrane segment at 237 to 257 threads the bilayer; sequence VPLGLCFAWALFMIGGMTFVP. The Cytoplasmic portion of the chain corresponds to 258–340; sequence ESPRYLAEVG…IQSLQQLTGD (83 aa). Residues 341-357 form a helical membrane-spanning segment; it reads NYFFYYGTTIFKAVGLS. Residues 358 to 363 are Extracellular-facing; it reads DSFETS. The helical transmembrane segment at 364–381 threads the bilayer; the sequence is IVLGIVNFASTFVGIYVV. Topologically, residues 382–388 are cytoplasmic; sequence ERYGRRT. A helical membrane pass occupies residues 389 to 409; that stretch reads CLLWGAASMTACMVVYASVGV. Over 410-431 the chain is Extracellular; that stretch reads TRLWPNGQDQPSSKGAGNCMIV. The helical transmembrane segment at 432–452 threads the bilayer; the sequence is FACFYIFCFATTWAPIPYVVV. Residues 453-469 lie on the Cytoplasmic side of the membrane; it reads SETFPLRVKSKAMSIAT. Residues 470–490 traverse the membrane as a helical segment; sequence AANWLWGFLIGFFTPFITGAI. A topological domain (extracellular) is located at residue Asn-491. A helical membrane pass occupies residues 492–512; sequence FYYGYVFMGCLVFMFFYVLLV. Residues 513 to 570 are Cytoplasmic-facing; it reads VPETKGLTLEEVNTMWEEGVLPWKSASWVPPSRRGANYDAEEMTHDDKPLYKRMFSTK. Phosphothreonine is present on Thr-556. Residue Lys-560 forms a Glycyl lysine isopeptide (Lys-Gly) (interchain with G-Cter in ubiquitin) linkage.

Belongs to the major facilitator superfamily. Sugar transporter (TC 2.A.1.1) family.

Its subcellular location is the membrane. Functionally, high-affinity glucose transporter. The chain is High-affinity hexose transporter HXT7 (HXT7) from Saccharomyces cerevisiae (strain ATCC 204508 / S288c) (Baker's yeast).